We begin with the raw amino-acid sequence, 111 residues long: Small ribosomal subunit protein uS17 (111 aa).

It belongs to the universal ribosomal protein uS17 family. Part of the 30S ribosomal subunit.

Its function is as follows. One of the primary rRNA binding proteins, it binds specifically to the 5'-end of 16S ribosomal RNA. The sequence is that of Small ribosomal subunit protein uS17 from Archaeoglobus fulgidus (strain ATCC 49558 / DSM 4304 / JCM 9628 / NBRC 100126 / VC-16).